The sequence spans 353 residues: D-alanine--D-alanine ligase (353 aa).

The 210-residue stretch at 135–344 (KMVFAQAGLA…FPQLVDRLVQ (210 aa)) folds into the ATP-grasp domain. An ATP-binding site is contributed by 171–226 (EAQLDYPMFVKPANLGSSVGISKVRTRDELEKALDLAAEYDRRLIVEAGVTAREVE). Mg(2+) is bound by residues D297, E311, and N313.

The protein belongs to the D-alanine--D-alanine ligase family. Mg(2+) is required as a cofactor. Requires Mn(2+) as cofactor.

It is found in the cytoplasm. It carries out the reaction 2 D-alanine + ATP = D-alanyl-D-alanine + ADP + phosphate + H(+). Its pathway is cell wall biogenesis; peptidoglycan biosynthesis. Functionally, cell wall formation. The sequence is that of D-alanine--D-alanine ligase from Picosynechococcus sp. (strain ATCC 27264 / PCC 7002 / PR-6) (Agmenellum quadruplicatum).